Here is a 327-residue protein sequence, read N- to C-terminus: GrpE protein homolog 2, mitochondrial (327 aa).

A mitochondrion-targeting transit peptide spans 1–39 (MLVLRILSRVTRNAGIRSSLSAVTLPARNQTPVFSSRFH). The segment at 68 to 140 (SSSTSPESDE…DSESDDDELS (73 aa)) is disordered. Composition is skewed to basic and acidic residues over residues 75–93 (SDEK…EKPT) and 103–113 (SESKDSVTDSA). The span at 130-140 (SDSESDDDELS) shows a compositional bias: acidic residues.

Belongs to the GrpE family. In terms of assembly, probable component of the PAM complex, at least composed of SSC1 (mtHsp70), MGE1, TIM44, PAM16/TIM16, PAM17 and PAM18/TIM14. Interacts with SSQ1.

The protein localises to the mitochondrion matrix. Functionally, essential component of the PAM complex, a complex required for the translocation of transit peptide-containing proteins from the inner membrane into the mitochondrial matrix in an ATP-dependent manner. Seems to control the nucleotide-dependent binding of mitochondrial HSP70 to substrate proteins. Binds ATP. Interacts with copper ions Cu(2+). Confers thermotolerance to long-term exposure at moderately high temperature (TMHT at 35 degrees Celsius). The polypeptide is GrpE protein homolog 2, mitochondrial (Arabidopsis thaliana (Mouse-ear cress)).